The following is a 171-amino-acid chain: Large ribosomal subunit protein bL17 (171 aa).

Positions 130-171 (PGYKKSKGKKATKAKGKKAKATPAAEAAAAATTEAAPAEEKK) are disordered. Basic residues predominate over residues 133 to 149 (KKSKGKKATKAKGKKAK). A compositionally biased stretch (low complexity) spans 150-165 (ATPAAEAAAAATTEAA).

This sequence belongs to the bacterial ribosomal protein bL17 family. As to quaternary structure, part of the 50S ribosomal subunit. Contacts protein L32.

This Opitutus terrae (strain DSM 11246 / JCM 15787 / PB90-1) protein is Large ribosomal subunit protein bL17.